The following is a 213-amino-acid chain: Orotate phosphoribosyltransferase (213 aa).

Residue K26 participates in 5-phospho-alpha-D-ribose 1-diphosphate binding. 34 to 35 contacts orotate; the sequence is FF. 5-phospho-alpha-D-ribose 1-diphosphate contacts are provided by residues 72-73, R99, K100, K103, H105, and 124-132; these read YK and DDVITAGTA. Residues T128 and R156 each coordinate orotate.

Belongs to the purine/pyrimidine phosphoribosyltransferase family. PyrE subfamily. Homodimer. Mg(2+) is required as a cofactor.

The catalysed reaction is orotidine 5'-phosphate + diphosphate = orotate + 5-phospho-alpha-D-ribose 1-diphosphate. It participates in pyrimidine metabolism; UMP biosynthesis via de novo pathway; UMP from orotate: step 1/2. Catalyzes the transfer of a ribosyl phosphate group from 5-phosphoribose 1-diphosphate to orotate, leading to the formation of orotidine monophosphate (OMP). The sequence is that of Orotate phosphoribosyltransferase from Haemophilus ducreyi (strain 35000HP / ATCC 700724).